The following is a 169-amino-acid chain: Crossover junction endodeoxyribonuclease RuvC (169 aa).

Active-site residues include D11, E71, and D143. 3 residues coordinate Mg(2+): D11, E71, and D143.

The protein belongs to the RuvC family. As to quaternary structure, homodimer which binds Holliday junction (HJ) DNA. The HJ becomes 2-fold symmetrical on binding to RuvC with unstacked arms; it has a different conformation from HJ DNA in complex with RuvA. In the full resolvosome a probable DNA-RuvA(4)-RuvB(12)-RuvC(2) complex forms which resolves the HJ. It depends on Mg(2+) as a cofactor.

It is found in the cytoplasm. The catalysed reaction is Endonucleolytic cleavage at a junction such as a reciprocal single-stranded crossover between two homologous DNA duplexes (Holliday junction).. In terms of biological role, the RuvA-RuvB-RuvC complex processes Holliday junction (HJ) DNA during genetic recombination and DNA repair. Endonuclease that resolves HJ intermediates. Cleaves cruciform DNA by making single-stranded nicks across the HJ at symmetrical positions within the homologous arms, yielding a 5'-phosphate and a 3'-hydroxyl group; requires a central core of homology in the junction. The consensus cleavage sequence is 5'-(A/T)TT(C/G)-3'. Cleavage occurs on the 3'-side of the TT dinucleotide at the point of strand exchange. HJ branch migration catalyzed by RuvA-RuvB allows RuvC to scan DNA until it finds its consensus sequence, where it cleaves and resolves the cruciform DNA. The protein is Crossover junction endodeoxyribonuclease RuvC of Rhizobium johnstonii (strain DSM 114642 / LMG 32736 / 3841) (Rhizobium leguminosarum bv. viciae).